The chain runs to 70 residues: Large ribosomal subunit protein bL31 (70 aa).

Cys-16, Cys-18, Cys-38, and Cys-41 together coordinate Zn(2+).

It belongs to the bacterial ribosomal protein bL31 family. Type A subfamily. As to quaternary structure, part of the 50S ribosomal subunit. It depends on Zn(2+) as a cofactor.

Its function is as follows. Binds the 23S rRNA. In Vesicomyosocius okutanii subsp. Calyptogena okutanii (strain HA), this protein is Large ribosomal subunit protein bL31.